The following is a 305-amino-acid chain: Virulence plasmid integrase pGP7-D (305 aa).

The Core-binding (CB) domain maps to 13-99 (LTFGDASEIW…CYISFTKFLY (87 aa)). Residues 127–305 (IKTESISKQE…SPLVQTPPIL (179 aa)) enclose the Tyr recombinase domain. Residues Lys-188 and Arg-257 contribute to the active site. Residue Tyr-289 is the O-(3'-phospho-DNA)-tyrosine intermediate of the active site.

This sequence belongs to the 'phage' integrase family.

The sequence is that of Virulence plasmid integrase pGP7-D from Chlamydia trachomatis serovar L2 (strain ATCC VR-902B / DSM 19102 / 434/Bu).